The chain runs to 410 residues: Putative ribonuclease E (410 aa).

One can recognise an S1 motif domain in the interval 39–119; the sequence is SNIYKGKIVR…GTKGALLTTF (81 aa). The Mg(2+) site is built by aspartate 303 and aspartate 346.

Belongs to the RNase E/G family. RNase E subfamily. Component of the RNA degradosome, which is a multiprotein complex involved in RNA processing and mRNA degradation. Within the RNA degradosome, RNase E assembles into a homotetramer formed by a dimer of dimers. Mg(2+) serves as cofactor.

It localises to the cytoplasm. It is found in the cell inner membrane. The catalysed reaction is Endonucleolytic cleavage of single-stranded RNA in A- and U-rich regions.. Functionally, endoribonuclease that plays a central role in RNA processing and decay. Required for the maturation of 5S and 16S rRNAs and the majority of tRNAs. Also involved in the degradation of most mRNAs. This chain is Putative ribonuclease E (rne), found in Buchnera aphidicola subsp. Baizongia pistaciae (strain Bp).